We begin with the raw amino-acid sequence, 350 residues long: Iron-regulated surface determinant protein A (350 aa).

The N-terminal stretch at 1–46 (MTKHYLNSKYQSEQRSSAMKKITMGTASIILGSLVYIGADSQQVNA) is a signal peptide. In terms of domain architecture, NEAT spans 62-184 (SQATSQPINF…EFEKAIPTLA (123 aa)). Residues K75, S82, and Y166 each contribute to the heme site. Residues 188-314 (KPNNVKPVQP…KQASKAKELP (127 aa)) are disordered. The span at 203–214 (KTPTEQTKPVQP) shows a compositional bias: low complexity. 2 stretches are compositionally biased toward polar residues: residues 252–268 (AHTVKTAQTAQEQNKVQ) and 278–296 (KSESNNQAVSDNKSQQTNK). Over residues 299-314 (KHNETPKQASKAKELP) the composition is skewed to basic and acidic residues. The short motif at 313–317 (LPKTG) is the LPXTG sorting signal element. The residue at position 316 (T316) is a Pentaglycyl murein peptidoglycan amidated threonine. Residues 317 to 350 (GLTSVDNFISTVAFATLALLGSLSLLLFKRKESK) constitute a propeptide, removed by sortase A.

This sequence belongs to the IsdA family. In terms of assembly, monomer. Interacts with IsdC. Interacts with IsdB.

It localises to the secreted. The protein localises to the cell wall. In terms of biological role, cell wall-anchored surface receptor that participates in the extraction of heme from oxidized methemoglobin/metHb to enable growth on hemoglobin as a sole iron source. Receives heme from IsdB and transfers it to IsdC. Also plays a role in the inhibition of host immune response. Protects S.aureus against the bactericidal protease activity of apolactoferrin. Decreases bacterial cellular hydrophobicity, which renders S.aureus resistant to bactericidal human skin fatty acids as well as to beta-defensins and cathelicidin. Also binds fibronectin and chains B-beta and gamma of fibrinogen, promoting clumping of S.aureus with fibrinogen. Involved in adherence of S.aureus to human desquamated nasal epithelial cells and is required for nasal colonization. The sequence is that of Iron-regulated surface determinant protein A (isdA) from Staphylococcus aureus (strain Mu3 / ATCC 700698).